The sequence spans 205 residues: Holliday junction branch migration complex subunit RuvA (205 aa).

The domain I stretch occupies residues 1–64 (MIGRLRGVLI…EDAQLLYGFI (64 aa)). The interval 65–143 (TKQERSLFRL…SLMEASVGSE (79 aa)) is domain II. The flexible linker stretch occupies residues 144–156 (REFVLQSNYSPAP). The domain III stretch occupies residues 157–205 (TVNSAEEDAISALISLGYKPPQASKAVSAAYKEGMDSETLIKAALKSML).

The protein belongs to the RuvA family. In terms of assembly, homotetramer. Forms an RuvA(8)-RuvB(12)-Holliday junction (HJ) complex. HJ DNA is sandwiched between 2 RuvA tetramers; dsDNA enters through RuvA and exits via RuvB. An RuvB hexamer assembles on each DNA strand where it exits the tetramer. Each RuvB hexamer is contacted by two RuvA subunits (via domain III) on 2 adjacent RuvB subunits; this complex drives branch migration. In the full resolvosome a probable DNA-RuvA(4)-RuvB(12)-RuvC(2) complex forms which resolves the HJ.

It is found in the cytoplasm. Functionally, the RuvA-RuvB-RuvC complex processes Holliday junction (HJ) DNA during genetic recombination and DNA repair, while the RuvA-RuvB complex plays an important role in the rescue of blocked DNA replication forks via replication fork reversal (RFR). RuvA specifically binds to HJ cruciform DNA, conferring on it an open structure. The RuvB hexamer acts as an ATP-dependent pump, pulling dsDNA into and through the RuvAB complex. HJ branch migration allows RuvC to scan DNA until it finds its consensus sequence, where it cleaves and resolves the cruciform DNA. The sequence is that of Holliday junction branch migration complex subunit RuvA from Shewanella sp. (strain MR-7).